The chain runs to 404 residues: MNQILPNSFRSGPDERGHFGIFGGRFVAETLMPLILELEKAYAEAKDDPAFRTEMDGYLKHYVGRPSPLYFAERLTEHFGGAKIYFKREDLNHTGAHKVNNVLGQIMLARRMGKQRIIAETGAGMHGVATATMCAKFGLQCVVYMGAVDVERQQPNVLRMKALGAEVRPVTSGANTLKDAMNEALRDWVTNVHDTFYCIGTVAGPHPYPMMVRDFQEVIGQEVREQILETEGRLPDSLIACIGGGSNAMGLFHPFLDDAGVVIYGVEAAGHGLSKLHAASIAGGKPGVLHGNRTYLLMDDDGQIQEAHSISAGLDYPGIGPEHAWLHDVGRVNFLSATDAEALDAFKLCCRLEGIIPALEPAHALAKVADLAPILPKDHLMVLNMSGRGDKDLASVAEHLGGKF.

K98 is modified (N6-(pyridoxal phosphate)lysine).

This sequence belongs to the TrpB family. As to quaternary structure, tetramer of two alpha and two beta chains. The cofactor is pyridoxal 5'-phosphate.

The enzyme catalyses (1S,2R)-1-C-(indol-3-yl)glycerol 3-phosphate + L-serine = D-glyceraldehyde 3-phosphate + L-tryptophan + H2O. Its pathway is amino-acid biosynthesis; L-tryptophan biosynthesis; L-tryptophan from chorismate: step 5/5. The beta subunit is responsible for the synthesis of L-tryptophan from indole and L-serine. This is Tryptophan synthase beta chain from Rhodopseudomonas palustris (strain BisB5).